The primary structure comprises 218 residues: MPMTLGYWNIRGLAHSIRLLLEYTDSSYEEKKYTMGDAPDYDRSQWLNEKFKLGLDFPNLPYLIDGTHKITQSNAILRYIARKHNLCGESEKEQIREDILENQFMDSRMQLAKLCYDPDFEKLKPEYLQALPEMLKLYSQFLGKQPWFLGDKITFVDFIAYDVLERNQVFEPSCLDAFPNLKDFISRFEGLEKISAYMKSSRFLPRPVFTKMAVWGNK.

In terms of domain architecture, GST N-terminal spans 2-88; the sequence is PMTLGYWNIR…YIARKHNLCG (87 aa). Residue 7-8 participates in glutathione binding; it reads YW. Phosphoserine occurs at positions 27 and 44. Glutathione contacts are provided by residues 43-46, Lys50, 59-60, and 72-73; these read RSQW, NL, and QS. One can recognise a GST C-terminal domain in the interval 90–208; that stretch reads SEKEQIREDI…KSSRFLPRPV (119 aa). Tyr116 lines the substrate pocket.

This sequence belongs to the GST superfamily. Mu family. Homodimer. In terms of tissue distribution, muscle.

The protein resides in the cytoplasm. It catalyses the reaction RX + glutathione = an S-substituted glutathione + a halide anion + H(+). It carries out the reaction 11(S)-hydroxy-14(S),15(S)-epoxy-(5Z,8Z,12E)-eicosatrienoate + glutathione = (11S,15S)-dihydroxy-14(R)-S-glutathionyl-(5Z,8Z,12E)-eicosatrienoate. In terms of biological role, conjugation of reduced glutathione to a wide number of exogenous and endogenous hydrophobic electrophiles. Participates in the formation of novel hepoxilin regioisomers. In Homo sapiens (Human), this protein is Glutathione S-transferase Mu 2.